A 331-amino-acid polypeptide reads, in one-letter code: Cysteine and histidine-rich domain-containing protein 1 (331 aa).

C5, C10, C24, H27, C42, C43, C59, H64, C157, C162, C176, H179, C194, C195, C211, and H216 together coordinate Zn(2+). 2 consecutive CHORD domains span residues 5–64 and 157–216; these read CYNR…KGLH and CKNA…TGTH. One can recognise a CS domain in the interval 227–316; it reads VVPCRHDWHQ…AEPLLWASLE (90 aa).

In terms of biological role, regulates centrosome duplication. The polypeptide is Cysteine and histidine-rich domain-containing protein 1 (CHORDC1) (Gallus gallus (Chicken)).